The following is a 346-amino-acid chain: Fructose-1,6-bisphosphatase class 1 (346 aa).

Mg(2+) contacts are provided by Glu96, Asp119, Leu121, and Asp122. Substrate-binding positions include Asp122 to Ser125, Asn214, Tyr247, and Lys277. A Mg(2+)-binding site is contributed by Glu283.

It belongs to the FBPase class 1 family. Homotetramer. It depends on Mg(2+) as a cofactor.

Its subcellular location is the cytoplasm. The catalysed reaction is beta-D-fructose 1,6-bisphosphate + H2O = beta-D-fructose 6-phosphate + phosphate. It participates in carbohydrate biosynthesis; gluconeogenesis. This Cytophaga hutchinsonii (strain ATCC 33406 / DSM 1761 / CIP 103989 / NBRC 15051 / NCIMB 9469 / D465) protein is Fructose-1,6-bisphosphatase class 1.